Reading from the N-terminus, the 585-residue chain is Arginine--tRNA ligase (585 aa).

A 'HIGH' region motif is present at residues 130-140 (ANPTGPMHVGH).

Belongs to the class-I aminoacyl-tRNA synthetase family. In terms of assembly, monomer.

The protein localises to the cytoplasm. The catalysed reaction is tRNA(Arg) + L-arginine + ATP = L-arginyl-tRNA(Arg) + AMP + diphosphate. In Methylorubrum extorquens (strain PA1) (Methylobacterium extorquens), this protein is Arginine--tRNA ligase.